The chain runs to 275 residues: 1-deoxy-11-beta-hydroxypentalenate dehydrogenase (275 aa).

12–36 serves as a coordination point for NAD(+); it reads GAASGIGLALSARFARAGAGVVMAD. Ser-144 lines the substrate pocket. Tyr-157 (proton acceptor) is an active-site residue. An NAD(+)-binding site is contributed by Lys-161.

The protein belongs to the short-chain dehydrogenases/reductases (SDR) family.

It carries out the reaction 1-deoxy-11beta-hydroxypentalenate + NAD(+) = 1-deoxy-11-oxopentalenate + NADH + H(+). It functions in the pathway antibiotic biosynthesis; pentalenolactone biosynthesis. Functionally, catalyzes the oxidation of 1-deoxy-11-beta-hydroxypentalenic acid to 1-deoxy-11-oxopentalenic acid in the biosynthesis of pentalenolactone antibiotic. This is 1-deoxy-11-beta-hydroxypentalenate dehydrogenase (penF) from Streptomyces exfoliatus (Streptomyces hydrogenans).